The primary structure comprises 252 residues: Chitooligosaccharide deacetylase (252 aa).

Residues H61 and H125 each coordinate Mg(2+).

This sequence belongs to the YdjC deacetylase family. ChbG subfamily. As to quaternary structure, homodimer. The cofactor is Mg(2+).

Its subcellular location is the cytoplasm. The enzyme catalyses N,N'-diacetylchitobiose + H2O = N-acetyl-beta-D-glucosaminyl-(1-&gt;4)-D-glucosamine + acetate. It catalyses the reaction diacetylchitobiose-6'-phosphate + H2O = N'-monoacetylchitobiose-6'-phosphate + acetate. It functions in the pathway glycan degradation; chitin degradation. Involved in the degradation of chitin. ChbG is essential for growth on the acetylated chitooligosaccharides chitobiose and chitotriose but is dispensable for growth on cellobiose and chitosan dimer, the deacetylated form of chitobiose. Deacetylation of chitobiose-6-P and chitotriose-6-P is necessary for both the activation of the chb promoter by the regulatory protein ChbR and the hydrolysis of phosphorylated beta-glucosides by the phospho-beta-glucosidase ChbF. Catalyzes the removal of only one acetyl group from chitobiose-6-P to yield monoacetylchitobiose-6-P, the inducer of ChbR and the substrate of ChbF. This chain is Chitooligosaccharide deacetylase, found in Escherichia fergusonii (strain ATCC 35469 / DSM 13698 / CCUG 18766 / IAM 14443 / JCM 21226 / LMG 7866 / NBRC 102419 / NCTC 12128 / CDC 0568-73).